Here is a 396-residue protein sequence, read N- to C-terminus: NAD(P)H oxidoreductase RTN4IP1, mitochondrial (396 aa).

The transit peptide at 1–40 directs the protein to the mitochondrion; sequence MGVLKTCVLRRSACAAACFWRRTVIPKPPFRGISTTSARS. The 342-residue stretch at 52–393 folds into the Enoyl reductase (ER) domain; the sequence is GKNEVLRFTQ…RGHARGKTVV (342 aa). Ser-214, Gly-216, Val-217, Ser-237, Tyr-255, Asn-276, Leu-300, Ala-341, Phe-343, His-386, Ala-387, and Arg-388 together coordinate NADPH.

Belongs to the zinc-containing alcohol dehydrogenase family. Quinone oxidoreductase subfamily. Interacts with RTN4, UQCRC1 and UQCRC2. Widely expressed in mitochondria-enriched tissues. Found in heart, kidney, liver, brain and spinal cord.

The protein localises to the mitochondrion matrix. Its subcellular location is the mitochondrion outer membrane. It catalyses the reaction a 3-demethylubiquinone + NADH + 2 H(+) = a 3-demethylubiquinol + NAD(+). It carries out the reaction a 3-demethylubiquinone + NADPH + 2 H(+) = a 3-demethylubiquinol + NADP(+). The enzyme catalyses 3-demethylubiquinone-10 + NADH + 2 H(+) = 3-demethylubiquinol-10 + NAD(+). The catalysed reaction is 3-demethylubiquinone-10 + NADPH + 2 H(+) = 3-demethylubiquinol-10 + NADP(+). It participates in cofactor biosynthesis; ubiquinone biosynthesis. NAD(P)H oxidoreductase involved in the ubiquinone biosynthetic pathway. Required for the O-methyltransferase activity of COQ3. Able to catalyze the oxidoreduction of 3-demethylubiquinone into 3-demethylubiquinol in vitro. However, it is unclear if 3-demethylubiquinone constitutes a substrate in vivo. May also play a role in the regulation of retinal ganglion cell (RGC) neurite outgrowth, and hence in the development of the inner retina and optic nerve. Appears to be a potent inhibitor of regeneration following spinal cord injury. The chain is NAD(P)H oxidoreductase RTN4IP1, mitochondrial from Mus musculus (Mouse).